The sequence spans 301 residues: Uricase (301 aa).

Residues K11 and T58 each act as charge relay system in the active site. Residues T58, D59, F160, R177, V228, Q229, and N255 each contribute to the urate site. H257 (charge relay system) is an active-site residue. The Microbody targeting signal motif lies at A299–L301.

This sequence belongs to the uricase family.

It localises to the peroxisome. It carries out the reaction urate + O2 + H2O = 5-hydroxyisourate + H2O2. It participates in purine metabolism; urate degradation; (S)-allantoin from urate: step 1/3. Functionally, catalyzes the oxidation of uric acid to 5-hydroxyisourate, which is further processed to form (S)-allantoin. The polypeptide is Uricase (uaZ) (Emericella nidulans (strain FGSC A4 / ATCC 38163 / CBS 112.46 / NRRL 194 / M139) (Aspergillus nidulans)).